We begin with the raw amino-acid sequence, 941 residues long: Endoglucanase (941 aa).

The first 29 residues, 1 to 29 (MKIKQIKQSLSLLLIITLIMSLFVPMASA), serve as a signal peptide directing secretion. SLH domains follow at residues 37–94 (NAFP…GLEA), 95–158 (SSKD…LSLP), and 161–224 (QREY…DYLY). E373 functions as the Proton donor in the catalytic mechanism. The active-site Nucleophile is E485.

It belongs to the glycosyl hydrolase 5 (cellulase A) family.

The catalysed reaction is Endohydrolysis of (1-&gt;4)-beta-D-glucosidic linkages in cellulose, lichenin and cereal beta-D-glucans.. This Bacillus sp. (strain KSM-635) protein is Endoglucanase.